Here is a 371-residue protein sequence, read N- to C-terminus: Lombricine kinase (371 aa).

One can recognise a Phosphagen kinase N-terminal domain in the interval 1 to 86 (MPKFTARQNF…FDAVINEKHG (86 aa)). The region spanning 113–355 (YVKSARIRTG…GKLIEYEKLL (243 aa)) is the Phosphagen kinase C-terminal domain. ATP contacts are provided by residues 116–120 (SARIR), His179, Arg224, Arg280, 308–313 (RGTGGE), and Asp323.

Belongs to the ATP:guanido phosphotransferase family. As to quaternary structure, homodimer.

The catalysed reaction is L-lombricine + ATP = N-phospho-L-lombricine + ADP + H(+). The protein is Lombricine kinase of Eisenia fetida (Red wiggler worm).